We begin with the raw amino-acid sequence, 301 residues long: UDP-N-acetylenolpyruvoylglucosamine reductase 1 (301 aa).

The FAD-binding PCMH-type domain maps to lysine 29–glycine 196. Arginine 174 is an active-site residue. Serine 225 functions as the Proton donor in the catalytic mechanism. Residue glutamate 295 is part of the active site.

The protein belongs to the MurB family. Requires FAD as cofactor.

It localises to the cytoplasm. It catalyses the reaction UDP-N-acetyl-alpha-D-muramate + NADP(+) = UDP-N-acetyl-3-O-(1-carboxyvinyl)-alpha-D-glucosamine + NADPH + H(+). The protein operates within cell wall biogenesis; peptidoglycan biosynthesis. In terms of biological role, cell wall formation. This chain is UDP-N-acetylenolpyruvoylglucosamine reductase 1, found in Bacillus thuringiensis subsp. konkukian (strain 97-27).